The chain runs to 231 residues: Uracil-DNA glycosylase (231 aa).

D70 functions as the Proton acceptor in the catalytic mechanism.

The protein belongs to the uracil-DNA glycosylase (UDG) superfamily. UNG family.

Its subcellular location is the cytoplasm. It catalyses the reaction Hydrolyzes single-stranded DNA or mismatched double-stranded DNA and polynucleotides, releasing free uracil.. Excises uracil residues from the DNA which can arise as a result of misincorporation of dUMP residues by DNA polymerase or due to deamination of cytosine. The chain is Uracil-DNA glycosylase from Campylobacter curvus (strain 525.92).